Here is a 512-residue protein sequence, read N- to C-terminus: DEAD-box ATP-dependent RNA helicase 5 (512 aa).

Disordered regions lie at residues 1-33 and 45-76; these read MGRS…KLEA and ATST…GGGK. Positions 14-45 form a coiled coil; that stretch reads SRKSKKEKKSKKDKKRKLEAEAEVVVVEAAAA. Residues 16-30 are compositionally biased toward basic residues; the sequence is KSKKEKKSKKDKKRK. The Q motif motif lies at 94–120; the sequence is SSFAATALPPQVLDCCKGFERPSPIQA. Residues 123–300 enclose the Helicase ATP-binding domain; sequence WPYLLDGRDF…QEFMDPNPIK (178 aa). Residue 136-143 participates in ATP binding; it reads AATGSGKT. The short motif at 248–251 is the DEAD box element; that stretch reads DEAD. The Helicase C-terminal domain maps to 333-476; that stretch reads LLDKYHKAQR…VVPPALTKFG (144 aa).

This sequence belongs to the DEAD box helicase family. DDX5/DBP2 subfamily.

The protein resides in the nucleus. Its subcellular location is the nucleolus. The enzyme catalyses ATP + H2O = ADP + phosphate + H(+). ATP-dependent RNA helicase required for 60S ribosomal subunit synthesis. Involved in efficient pre-rRNA processing, predominantly at site A3, which is necessary for the normal formation of 25S and 5.8S rRNAs. The sequence is that of DEAD-box ATP-dependent RNA helicase 5 from Oryza sativa subsp. japonica (Rice).